Here is a 718-residue protein sequence, read N- to C-terminus: Polyribonucleotide nucleotidyltransferase (718 aa).

Mg(2+)-binding residues include Asp506 and Asp512. Positions 572–632 constitute a KH domain; that stretch reads PKLELFSVDP…EQIKAAKDYI (61 aa). Residues 657 to 718 form the S1 motif domain; that stretch reads GQEFQGIVKK…NGKISVDLCE (62 aa).

The protein belongs to the polyribonucleotide nucleotidyltransferase family. Mg(2+) serves as cofactor.

The protein localises to the cytoplasm. The catalysed reaction is RNA(n+1) + phosphate = RNA(n) + a ribonucleoside 5'-diphosphate. Its function is as follows. Involved in mRNA degradation. Catalyzes the phosphorolysis of single-stranded polyribonucleotides processively in the 3'- to 5'-direction. This chain is Polyribonucleotide nucleotidyltransferase, found in Campylobacter jejuni subsp. doylei (strain ATCC BAA-1458 / RM4099 / 269.97).